The chain runs to 185 residues: Protein PBP4 (185 aa).

Composition is skewed to low complexity over residues 1-24 (MTTTSTTSVDGRTSSTLKATLSAS) and 46-62 (AQAAAKALPRQQQQQQQ). Disordered stretches follow at residues 1-116 (MTTT…YNRE) and 147-168 (ETASGRVSTATDWGTVSSSKNK). Polar residues-rich tracts occupy residues 73 to 83 (PANTKTKTIAS), 91 to 102 (KGSSTANGSSTN), and 147 to 166 (ETASGRVSTATDWGTVSSSK).

As to quaternary structure, interacts with IGO1, LSM12 and PBP1.

It is found in the cytoplasm. It localises to the nucleus. The polypeptide is Protein PBP4 (PBP4) (Saccharomyces cerevisiae (strain ATCC 204508 / S288c) (Baker's yeast)).